The chain runs to 210 residues: Adenylate kinase (210 aa).

10–15 is an ATP binding site; it reads GSGKGT. The interval 30–54 is NMP; the sequence is SCGDILRKQNKCCDINKLIKKGELI. AMP-binding positions include R36, 52 to 54, 80 to 83, and Q87; these read ELI and GFPR. An LID region spans residues 117–154; that stretch reads GRIIDKVSGEIYHLKFNPPKFITEKSNKNKILVRRLDD. Residues R118 and 127 to 128 each bind ATP; that span reads IY. AMP-binding residues include R151 and R162. F195 is an ATP binding site.

This sequence belongs to the adenylate kinase family. Monomer.

Its subcellular location is the cytoplasm. It catalyses the reaction AMP + ATP = 2 ADP. It functions in the pathway purine metabolism; AMP biosynthesis via salvage pathway; AMP from ADP: step 1/1. Its function is as follows. Catalyzes the reversible transfer of the terminal phosphate group between ATP and AMP. Plays an important role in cellular energy homeostasis and in adenine nucleotide metabolism. The polypeptide is Adenylate kinase (Wigglesworthia glossinidia brevipalpis).